The chain runs to 351 residues: MLPDWINSECPAPSGAHRESALARQAQLTKPLGALGRLEEVAVELAALQAAEKPAAERVPVVLFAGDHGIAAQGVSAYPPEVTVQMLHNFAGGGAAIAVLAHSLGCPLEVVDVGTLADGQMRGVVVDKPRRGTRDFSVEQALTPADVAFVSEAGLRAVARQADHAPDLVIFGEMGIGNTTSAAAIAAALLACAPADIVGSGTGLDAEGRARKAKVIEDALTRHGLTAATPVAEVLAAVGGLEIIAMAGAIVAAAQRSWPVLVDGFIVSVAALVATRLNPSCRPWLLFSHRSAERGHAVVLDALGARPLIDLDLRLGEASGAATALPILRLACALHNGMATFAEAAVSGREA.

Glu317 (proton acceptor) is an active-site residue.

The protein belongs to the CobT family.

The enzyme catalyses 5,6-dimethylbenzimidazole + nicotinate beta-D-ribonucleotide = alpha-ribazole 5'-phosphate + nicotinate + H(+). It participates in nucleoside biosynthesis; alpha-ribazole biosynthesis; alpha-ribazole from 5,6-dimethylbenzimidazole: step 1/2. In terms of biological role, catalyzes the synthesis of alpha-ribazole-5'-phosphate from nicotinate mononucleotide (NAMN) and 5,6-dimethylbenzimidazole (DMB). The protein is Nicotinate-nucleotide--dimethylbenzimidazole phosphoribosyltransferase of Bradyrhizobium sp. (strain ORS 278).